A 152-amino-acid polypeptide reads, in one-letter code: MNKRRAKGKSHSIRPARAGAPKWVRLTREEVEMLVEELAKRGYTPSMIGIILRDQYGIPLVKQIVGKKVTQILEERGLAPQIPEDLFNLIRKAVNVRRHINEYPRDKTAKKGLEEIESKIRRLTRYYKGIGKLPQEWVYDPAKAELLVAGAS.

The protein belongs to the universal ribosomal protein uS15 family. In terms of assembly, part of the 30S ribosomal subunit.

In Saccharolobus solfataricus (strain ATCC 35092 / DSM 1617 / JCM 11322 / P2) (Sulfolobus solfataricus), this protein is Small ribosomal subunit protein uS15.